A 194-amino-acid chain; its full sequence is Large ribosomal subunit protein bL25 (194 aa).

It belongs to the bacterial ribosomal protein bL25 family. CTC subfamily. In terms of assembly, part of the 50S ribosomal subunit; part of the 5S rRNA/L5/L18/L25 subcomplex. Contacts the 5S rRNA. Binds to the 5S rRNA independently of L5 and L18.

This is one of the proteins that binds to the 5S RNA in the ribosome where it forms part of the central protuberance. The polypeptide is Large ribosomal subunit protein bL25 (Geobacter sulfurreducens (strain ATCC 51573 / DSM 12127 / PCA)).